The primary structure comprises 276 residues: F420-dependent methylenetetrahydromethanopterin dehydrogenase (276 aa).

Belongs to the MTD family.

The catalysed reaction is 5,10-methylenetetrahydromethanopterin + oxidized coenzyme F420-(gamma-L-Glu)(n) + 2 H(+) = 5,10-methenyl-5,6,7,8-tetrahydromethanopterin + reduced coenzyme F420-(gamma-L-Glu)(n). Catalyzes the oxidation of methylene-H(4)MPT to methenyl-H(4)MPT(+). The chain is F420-dependent methylenetetrahydromethanopterin dehydrogenase from Methanosphaera stadtmanae (strain ATCC 43021 / DSM 3091 / JCM 11832 / MCB-3).